We begin with the raw amino-acid sequence, 305 residues long: Thyroxine 5-deiodinase (305 aa).

At 1-43 (MPGQAGRRRLVGGGCRGSQGPLGGAATMLRSLLLHSLRLCAQT) the chain is on the cytoplasmic side. The chain crosses the membrane as a helical; Signal-anchor for type II membrane protein span at residues 44-63 (ASCLVLFPRFLGTACMLWLL). Residues 64–305 (DFLCIRKHLL…QLHGPQPRRV (242 aa)) lie on the Extracellular side of the membrane. A disordered region spans residues 79–98 (GEPETEVELNSDGDEVPPDD). Residues 82–96 (ETEVELNSDGDEVPP) are compositionally biased toward acidic residues. The active site involves U171. A non-standard amino acid (selenocysteine) is located at residue U171.

The protein belongs to the iodothyronine deiodinase family. As to quaternary structure, monomer. Homodimer. May undergo minor heretodimerization with DIO1 and DIO2. Expressed in brain only.

The protein localises to the cell membrane. The protein resides in the endosome membrane. The enzyme catalyses 3,3',5'-triiodo-L-thyronine + iodide + A + H(+) = L-thyroxine + AH2. It carries out the reaction 3,3'-diiodo-L-thyronine + iodide + A + H(+) = 3,3',5-triiodo-L-thyronine + AH2. It catalyses the reaction 3-iodo-L-thyronine + iodide + A + H(+) = 3,5-diiodo-L-thyronine + AH2. The catalysed reaction is L-thyronine + iodide + A + H(+) = 3-iodo-L-thyronine + AH2. The enzyme catalyses 3',5'-diiodo-L-thyronine + iodide + A + H(+) = 3,3',5'-triiodo-L-thyronine + AH2. It carries out the reaction 3'-iodo-L-thyronine + iodide + A + H(+) = 3,3'-diiodo-L-thyronine + AH2. It catalyses the reaction 3,3',5'-triiodothyronamine + iodide + A + H(+) = 3,3',5,5'-tetraiodothyronamine + AH2. The catalysed reaction is 3',5'-diiodothyronamine + iodide + A + H(+) = 3,3',5'-triiodothyronamine + AH2. The enzyme catalyses 3,3'-diiodothyronamine + iodide + A + H(+) = 3,3',5-triiodothyronamine + AH2. It carries out the reaction 3-iodothyronamine + iodide + A + H(+) = 3,5-diiodothyronamine + AH2. It catalyses the reaction 3'-iodothyronamine + iodide + A + H(+) = 3,3'-diiodothyronamine + AH2. The catalysed reaction is thyronamine + iodide + A + H(+) = 3-iodothyronamine + AH2. Plays a crucial role in the metabolism of thyroid hormones (TH) and has specific roles in TH activation and inactivation by deiodination, particularly in different tissues. Catalyzes the deiodination of L-thyroxine (T4) to 3,3',5'-triiodothyronine (rT3), 3,5-diiodothyronine (3,5-T2) to 3-monoiodothyronine (3-T1), rT3 to 3',5'-diiodothyronine (3',5'-T2) and 3,3'-diiodothyronine (3,3'-T2) to 3'-monoiodothyronine (3'-T1) via inner-ring deiodination (IRD). Catalyzes the deiodination of 3,5,3'-triiodothyronine (T3) to 3,3'-diiodothyronine (3,3'-T2) via IRD. Catalyzes the deiodination of 3-T1 to L-thyronine (T0) via outer-ring deiodination (ORD). Catalyzes the tyrosyl ring deiodinations of 3,3',5,5'-tetraiodothyronamine, 3,3',5'-triiodothyronamine, 3,5,3'-triiodothyronamine, 3,5-diiodothyronamine, 3,3'-diiodothyronamine and 3-iodothyronamine. This Sus scrofa (Pig) protein is Thyroxine 5-deiodinase (DIO3).